A 246-amino-acid polypeptide reads, in one-letter code: Glutamate/aspartate import permease protein GltJ (246 aa).

Positions 29-230 (FQVTIALSIC…LINAFIMLVM (202 aa)) constitute an ABC transmembrane type-1 domain. The next 5 membrane-spanning stretches (helical) occupy residues 33 to 53 (IALS…FGIL), 74 to 94 (NVPL…LLPE), 104 to 124 (LDPN…FTAA), 179 to 196 (LVKN…DMAA), and 212 to 232 (FTAI…VMTL).

The protein belongs to the binding-protein-dependent transport system permease family. HisMQ subfamily. The complex is composed of two ATP-binding proteins (GltL), two transmembrane proteins (GltJ and GltK) and a solute-binding protein (GltI).

It localises to the cell inner membrane. In terms of biological role, part of the ABC transporter complex GltIJKL involved in glutamate and aspartate uptake. Probably responsible for the translocation of the substrate across the membrane. The protein is Glutamate/aspartate import permease protein GltJ (gltJ) of Escherichia coli O6:H1 (strain CFT073 / ATCC 700928 / UPEC).